The sequence spans 398 residues: Histone-lysine N-methyltransferase ASHR2 (398 aa).

The 260-residue stretch at threonine 11–phenylalanine 270 folds into the SET domain.

The protein belongs to the class V-like SAM-binding methyltransferase superfamily. Histone-lysine methyltransferase family. SET2 subfamily.

Its subcellular location is the nucleus. The protein localises to the chromosome. It carries out the reaction L-lysyl-[histone] + S-adenosyl-L-methionine = N(6)-methyl-L-lysyl-[histone] + S-adenosyl-L-homocysteine + H(+). Functionally, histone methyltransferase. The chain is Histone-lysine N-methyltransferase ASHR2 (ASHR2) from Arabidopsis thaliana (Mouse-ear cress).